The chain runs to 1186 residues: Atrophin-1 (1186 aa).

Disordered stretches follow at residues 1–604 (MKTR…PTVT), 618–763 (ASSP…ARFN), and 781–858 (VPLE…HRPP). The Nuclear localization signal signature appears at 16-32 (RKKEAPGPREELRSRGR). Basic and acidic residues predominate over residues 17–29 (KKEAPGPREELRS). S34 bears the Phosphoserine mark. Positions 45–63 (GKAEKSRQTAKKARVEEAS) are enriched in basic and acidic residues. Phosphoserine is present on residues S77, S79, S100, S102, and S106. Positions 107–127 (LDGRSLNDDGSSDPRDIDQDN) are enriched in basic and acidic residues. The segment covering 128-151 (RSTSPSIYSPGSVENDSDSSSGLS) has biased composition (polar residues). A compositionally biased stretch (pro residues) spans 157–173 (PYHPPPLFPPSPQPPDS). 3 stretches are compositionally biased toward low complexity: residues 258–270 (PISV…SGAP), 349–365 (PTLA…SSSA), and 375–396 (SSSS…SSAS). Over residues 416–437 (SLSVSNQPPKYTQPSLPSQAVW) the composition is skewed to polar residues. The segment covering 484-503 (QQQQQQQQQQQQQQQHHGNS) has biased composition (low complexity). Residues 513 to 563 (HPLEGGSSHHAHPYAMSPSLGSLRPYPPGPAHLPPPHSQVSYSQAGPNGPP) form an involved in binding BAIAP2 region. Positions 537–549 (PYPPGPAHLPPPH) are enriched in pro residues. Low complexity-rich tracts occupy residues 565-582 (SSSS…YPCS) and 618-628 (ASSPAGYKTAS). S628 is subject to Phosphoserine. Residue K637 is modified to N6-acetyllysine. A Phosphothreonine modification is found at T649. S657 bears the Phosphoserine mark. The residue at position 665 (T665) is a Phosphothreonine. Composition is skewed to pro residues over residues 689–714 (GPGP…PASG) and 735–748 (SPVP…PPPK). S735 is subject to Phosphoserine; by MAPK8. S742 and S744 each carry phosphoserine. A compositionally biased stretch (basic and acidic residues) spans 791-835 (KRADLVEKVRREAEQRAREEKEREREREREKEREREKERELERSV). The tract at residues 875 to 890 (DTPALRTLSEYARPHV) is required for interaction with FAT1. Phosphoserine is present on S892. Residues 1029–1037 (ALGNDPLAR) carry the Nuclear export signal motif. R1111 is modified (asymmetric dimethylarginine). K1179 participates in a covalent cross-link: Glycyl lysine isopeptide (Lys-Gly) (interchain with G-Cter in SUMO2).

In terms of assembly, interacts with NR2E1; the interaction represses the transcriptional activity of NR2E1. Interacts with BAIAP2, WWP1, WWP2, WWP3 and RERE. Interacts (via its N-terminus) with MTG8; the interaction enhances transcriptional repression of MTG8. Interacts with FAT1 (via a C-terminal domain). Interacts with PQBP1. In terms of processing, phosphorylated in vitro by MAPK8/JNK1 on Ser-735.

It is found in the nucleus. The protein resides in the cytoplasm. It localises to the perinuclear region. The protein localises to the cell junction. Its function is as follows. Transcriptional corepressor. Corepressor of MTG8 transcriptional repression. Recruits NR2E1 to repress transcription. Has some intrinsic repression activity. Promotes vascular smooth cell (VSMC) migration and orientation. In Pan troglodytes (Chimpanzee), this protein is Atrophin-1 (ATN1).